We begin with the raw amino-acid sequence, 377 residues long: Chaperone protein DnaJ (377 aa).

In terms of domain architecture, J spans Asp5–Gly70. The CR-type zinc finger occupies Gly133–Thr211. Zn(2+)-binding residues include Cys146, Cys149, Cys163, Cys166, Cys185, Cys188, Cys199, and Cys202. CXXCXGXG motif repeat units lie at residues Cys146 to Gly153, Cys163 to Gly170, Cys185 to Gly192, and Cys199 to Gly206.

It belongs to the DnaJ family. Homodimer. Zn(2+) is required as a cofactor.

The protein localises to the cytoplasm. Functionally, participates actively in the response to hyperosmotic and heat shock by preventing the aggregation of stress-denatured proteins and by disaggregating proteins, also in an autonomous, DnaK-independent fashion. Unfolded proteins bind initially to DnaJ; upon interaction with the DnaJ-bound protein, DnaK hydrolyzes its bound ATP, resulting in the formation of a stable complex. GrpE releases ADP from DnaK; ATP binding to DnaK triggers the release of the substrate protein, thus completing the reaction cycle. Several rounds of ATP-dependent interactions between DnaJ, DnaK and GrpE are required for fully efficient folding. Also involved, together with DnaK and GrpE, in the DNA replication of plasmids through activation of initiation proteins. This Shewanella sp. (strain MR-4) protein is Chaperone protein DnaJ.